Consider the following 217-residue polypeptide: GRB2-related adapter protein (217 aa).

The SH3 1 domain occupies 1 to 58 (MESVALYSFQATESDELAFNKGDTLKILNMEDDQNWYKAELRGVEGFIPKNYIRVKPH). The SH2 domain maps to 60 to 154 (WYSGRISRQL…QIFLRDEEPL (95 aa)). In terms of domain architecture, SH3 2 spans 158 to 217 (PGACFAQAQFDFSAQDPSQLSFRRGDIIEVLERPDPHWWRGRSCGRVGFFPRSYVQPVHL).

Belongs to the GRB2/sem-5/DRK family. In terms of assembly, associates through its SH2 domain with ligand-activated receptors for stem cell factor (KIT) and erythropoietin (EPOR). Also forms a stable complex with the Bcr-Abl oncoprotein. GRAP is associated with the Ras guanine nucleotide exchange factor SOS1, primarily through its N-terminal SH3 domain. Interacts with phosphorylated LAT upon TCR activation. Interacts with SHB.

The protein localises to the membrane. The protein resides in the synapse. Couples signals from receptor and cytoplasmic tyrosine kinases to the Ras signaling pathway. Plays a role in the inner ear and in hearing. The sequence is that of GRB2-related adapter protein from Homo sapiens (Human).